A 121-amino-acid polypeptide reads, in one-letter code: MMSMVEIPEGKLIPAIAQDWKTGEVLMLAYINSIALSKTLETGVAHYWSRSRGKLWRKGESSGNEQIVKEILVDCDEDAILLKVEQKGGACHTGYRSCFYRTLDGRIVGKRIFDPDEVYKR.

D74 serves as a coordination point for Mg(2+). C75 is a Zn(2+) binding site. Positions 76 and 78 each coordinate Mg(2+). C91 and C98 together coordinate Zn(2+).

This sequence belongs to the PRA-CH family. Homodimer. Mg(2+) serves as cofactor. It depends on Zn(2+) as a cofactor.

It is found in the cytoplasm. The enzyme catalyses 1-(5-phospho-beta-D-ribosyl)-5'-AMP + H2O = 1-(5-phospho-beta-D-ribosyl)-5-[(5-phospho-beta-D-ribosylamino)methylideneamino]imidazole-4-carboxamide. It participates in amino-acid biosynthesis; L-histidine biosynthesis; L-histidine from 5-phospho-alpha-D-ribose 1-diphosphate: step 3/9. Its function is as follows. Catalyzes the hydrolysis of the adenine ring of phosphoribosyl-AMP. The sequence is that of Phosphoribosyl-AMP cyclohydrolase from Methanothrix thermoacetophila (strain DSM 6194 / JCM 14653 / NBRC 101360 / PT) (Methanosaeta thermophila).